Consider the following 595-residue polypeptide: Mitoguardin 1 (595 aa).

Helical transmembrane passes span 11 to 31 (LPIK…YYSL) and 38 to 58 (TGTK…IIIA).

Belongs to the mitoguardin family. As to quaternary structure, homodimer and heterodimer; forms heterodimers with miga2.

It is found in the mitochondrion outer membrane. Functionally, regulator of mitochondrial fusion: acts by forming homo- and heterodimers at the mitochondrial outer membrane and facilitating the formation of pld6/MitoPLD dimers. May act by regulating phospholipid metabolism via pld6/MitoPLD. The protein is Mitoguardin 1 of Danio rerio (Zebrafish).